A 215-amino-acid polypeptide reads, in one-letter code: Probable transaldolase (215 aa).

Residue Lys83 is the Schiff-base intermediate with substrate of the active site.

Belongs to the transaldolase family. Type 3B subfamily.

It localises to the cytoplasm. It carries out the reaction D-sedoheptulose 7-phosphate + D-glyceraldehyde 3-phosphate = D-erythrose 4-phosphate + beta-D-fructose 6-phosphate. The protein operates within carbohydrate degradation; pentose phosphate pathway; D-glyceraldehyde 3-phosphate and beta-D-fructose 6-phosphate from D-ribose 5-phosphate and D-xylulose 5-phosphate (non-oxidative stage): step 2/3. Transaldolase is important for the balance of metabolites in the pentose-phosphate pathway. The sequence is that of Probable transaldolase from Methanococcus maripaludis (strain DSM 14266 / JCM 13030 / NBRC 101832 / S2 / LL).